A 1475-amino-acid polypeptide reads, in one-letter code: Amylopullulanase (1475 aa).

The first 31 residues, 1-31, serve as a signal peptide directing secretion; it reads MFKRRALGFLLAFLLVFTAVFGSMPMEFAKA. Ca(2+) is bound by residues D245, N247, D285, D340, N398, D400, N403, D404, G449, and D451. Substrate-binding residues include H524 and R627. Catalysis depends on D629, which acts as the Nucleophile. E658 serves as the catalytic Proton donor. Residues 734-735, D794, and R798 each bind substrate; that span reads HD. Fibronectin type-III domains lie at 928 to 1019 and 1164 to 1257; these read APQP…PAFP and TPTA…TPDI. The CBM20 domain occupies 1255-1362; it reads PDIIPIKVTF…VNDTVQRWRD (108 aa).

Belongs to the glycosyl hydrolase 13 family. Ca(2+) serves as cofactor.

It catalyses the reaction Endohydrolysis of (1-&gt;4)-alpha-D-glucosidic linkages in polysaccharides containing three or more (1-&gt;4)-alpha-linked D-glucose units.. The catalysed reaction is Hydrolysis of (1-&gt;6)-alpha-D-glucosidic linkages in pullulan, amylopectin and glycogen, and in the alpha- and beta-limit dextrins of amylopectin and glycogen.. The sequence is that of Amylopullulanase (apu) from Thermoanaerobacter thermohydrosulfuricus (Clostridium thermohydrosulfuricum).